A 253-amino-acid polypeptide reads, in one-letter code: Demethylmenaquinone methyltransferase (253 aa).

Residues T75, D96, and 124-125 (DA) each bind S-adenosyl-L-methionine.

Belongs to the class I-like SAM-binding methyltransferase superfamily. MenG/UbiE family.

The catalysed reaction is a 2-demethylmenaquinol + S-adenosyl-L-methionine = a menaquinol + S-adenosyl-L-homocysteine + H(+). Its pathway is quinol/quinone metabolism; menaquinone biosynthesis; menaquinol from 1,4-dihydroxy-2-naphthoate: step 2/2. In terms of biological role, methyltransferase required for the conversion of demethylmenaquinol (DMKH2) to menaquinol (MKH2). This chain is Demethylmenaquinone methyltransferase, found in Desulfitobacterium hafniense (strain Y51).